The primary structure comprises 314 residues: tRNA pseudouridine synthase B (314 aa).

Position 43 (His43) interacts with substrate. Asp48 functions as the Nucleophile in the catalytic mechanism. 3 residues coordinate substrate: Tyr76, Tyr179, and Leu200.

It belongs to the pseudouridine synthase TruB family. Type 1 subfamily.

The catalysed reaction is uridine(55) in tRNA = pseudouridine(55) in tRNA. Responsible for synthesis of pseudouridine from uracil-55 in the psi GC loop of transfer RNAs. The chain is tRNA pseudouridine synthase B from Salmonella paratyphi B (strain ATCC BAA-1250 / SPB7).